The chain runs to 164 residues: Protein LIGHT-DEPENDENT SHORT HYPOCOTYLS 8 (164 aa).

One can recognise an ALOG domain in the interval 23-150; it reads RYESQKSRDW…ARGVLYKKKK (128 aa). Residues 148–152 carry the Nuclear localization signal motif; that stretch reads KKKRL.

This sequence belongs to the plant homeotic and developmental regulators ALOG protein family.

The protein resides in the nucleus. In terms of biological role, probable transcription regulator that acts as a developmental regulator by promoting cell growth in response to light. The sequence is that of Protein LIGHT-DEPENDENT SHORT HYPOCOTYLS 8 (LSH8) from Arabidopsis thaliana (Mouse-ear cress).